The primary structure comprises 429 residues: Histidine--tRNA ligase (429 aa).

Belongs to the class-II aminoacyl-tRNA synthetase family. In terms of assembly, homodimer.

It localises to the cytoplasm. It catalyses the reaction tRNA(His) + L-histidine + ATP = L-histidyl-tRNA(His) + AMP + diphosphate + H(+). In Streptococcus pneumoniae (strain P1031), this protein is Histidine--tRNA ligase.